A 252-amino-acid chain; its full sequence is Phosphoglycolate phosphatase (252 aa).

D13 acts as the Nucleophile in catalysis. 3 residues coordinate Mg(2+): D13, D15, and D192.

It belongs to the HAD-like hydrolase superfamily. CbbY/CbbZ/Gph/YieH family. In terms of assembly, monomer. Requires Mg(2+) as cofactor. Chloride is required as a cofactor.

The enzyme catalyses 2-phosphoglycolate + H2O = glycolate + phosphate. Its pathway is organic acid metabolism; glycolate biosynthesis; glycolate from 2-phosphoglycolate: step 1/1. Specifically catalyzes the dephosphorylation of 2-phosphoglycolate. Is involved in the dissimilation of the intracellular 2-phosphoglycolate formed during the DNA repair of 3'-phosphoglycolate ends, a major class of DNA lesions induced by oxidative stress. The polypeptide is Phosphoglycolate phosphatase (Shigella flexneri).